Reading from the N-terminus, the 353-residue chain is uncharacterized protein (353 aa).

A helical membrane pass occupies residues glycine 267 to cysteine 287.

Belongs to the glycosyltransferase group 1 family. Glycosyltransferase 4 subfamily.

The protein localises to the membrane. This is an uncharacterized protein from Haemophilus influenzae (strain ATCC 51907 / DSM 11121 / KW20 / Rd).